The sequence spans 156 residues: Arginine repressor (156 aa).

It belongs to the ArgR family.

The protein resides in the cytoplasm. The protein operates within amino-acid biosynthesis; L-arginine biosynthesis [regulation]. Functionally, regulates arginine biosynthesis genes. In Photorhabdus laumondii subsp. laumondii (strain DSM 15139 / CIP 105565 / TT01) (Photorhabdus luminescens subsp. laumondii), this protein is Arginine repressor.